Reading from the N-terminus, the 1631-residue chain is MERRAAGPGWAAYERLTAEEMDEQRRQNVAYQYLCRLEEAKRWMEACLKEELPSPVELEESLRNGVLLAKLGHCFAPSVVPLKKIYDVEQLRYQATGLHFRHTDNINFWLSAIAHIGLPSTFFPETTDIYDKKNMPRVVYCIHALSLFLFRLGLAPQIHDLYGKVKFTAEELSNMASELAKYGLQLPAFSKIGGILANELSVDEAAVHAAVLAINEAVERGVVEDTLAALQNPSALLENLREPLAAVYQEMLAQAKMEKAANARNHDDRESQDIYDHYLTQAEIQGNINHVNVHGALEVVDDALERQSPEALLKALQDPALALRGVRRDFADWYLEQLNSDREQKAQELGLVELLEKEEVQAGVAAANTKGDQEQAMLHAVQRINKAIRRRVAADTVKELMCPEAQLPPVYPVASSMYQLELAVLQQQQGELGQEELFVAVEMLSAVVLINRALEARDASGFWSSLVNPATGLAEVEGENAQRYFDALLKLRQERGMGEDFLSWNDLQATVSQVNAQTQEETDRVLAVSLINEALDKGSPEKTLSALLLPAAGLDDVSLPVAPRYHLLLVAAKRQKAQVTGDPGAVLWLEEIRQGVVRANQDTNTAQRMALGVAAINQAIKEGKAAQTERVLRNPAVALRGVVPDCANGYQRALESAMAKKQRPADTAFWVQHDMKDGTAYYFHLQTFQGIWEQPPGCPLNTSHLTREEIQSAVTKVTAAYDRQQLWKANVGFVIQLQARLRGFLVRQKFAEHSHFLRTWLPAVIKIQAHWRGYRQRKIYLEWLQYFKANLDAIIKIQAWARMWAARRQYLRRLHYFQKNVNSIVKIQAFFRARKAQDDYRILVHAPHPPLSVVRRFAHLLNQSQQDFLAEAELLKLQEEVVRKIRSNQQLEQDLNIMDIKIGLLVKNRITLQEVVSHCKKLTKRNKEQLSDMMVLDKQKGLKSLSKEKRQKLEAYQHLFYLLQTQPIYLAKLIFQMPQNKTTKFMEAVIFSLYNYASSRREAYLLLQLFKTALQEEIKSKVEQPQDVVTGNPTVVRLVVRFYRNGRGQSALQEILGKVIQDVLEDKVLSVHTDPVHLYKNWINQTEAQTGQRSHLPYDVTPEQALSHPEVQRRLDIALRNLLAMTDKFLLAITSSVDQIPYGMRYVAKVLKATLAEKFPDATDSEVYKVVGNLLYYRFLNPAVVAPDAFDIVAMAAGGALAAPQRHALGAVAQLLQHAAAGKAFSGQSQHLRVLNDYLEETHLKFRKFIHRACQVPEPEERFAVDEYSDMVAVAKPMVYITVGELVNTHRLLLEHQDCIAPDHQDPLHELLEDLGELPTIPDLIGESIAADGHTDLSKLEVSLTLTNKFEGLEADADDSNTRSLLLSTKQLLADIIQFHPGDTLKEILSLSASREQEAAHKQLMSRRQACTAQTPEPLRRHRSLTAHSLLPLAEKQRRVLRNLRRLEALGLVSARNGYQGLVDELAKDIRNQHRHRHRRKAELVKLQATLQGLSTKTTFYEEQGDYYSQYIRACLDHLAPDSKSSGKGKKQPSLHYTAAQLLEKGVLVEIEDLPASHFRNVIFDITPGDEAGKFEVNAKFLGVDMERFQLHYQDLLQLQYEGVAVMKLFNKAKVNVNLLIFLLNKKFLRK.

In terms of domain architecture, Calponin-homology (CH) spans 34-149 (LCRLEEAKRW…YCIHALSLFL (116 aa)). A Phosphotyrosine modification is found at Y162. S539 carries the phosphoserine modification. IQ domains follow at residues 730-759 (NVGF…FLRT), 760-789 (WLPA…YFKA), 790-819 (NLDA…YFQK), and 820-849 (NVNS…APHP). The region spanning 1004–1253 (YLLLQLFKTA…LKFRKFIHRA (250 aa)) is the Ras-GAP domain. S1424 carries the phosphoserine modification.

The sequence is that of Ras GTPase-activating-like protein IQGAP3 (IQGAP3) from Homo sapiens (Human).